Reading from the N-terminus, the 242-residue chain is Ras-like protein family member 11A (242 aa).

Residues 17–241 (ESSSDYLLPK…SPKVKAPSAL (225 aa)) form a small GTPase-like region. GTP is bound by residues 34 to 41 (GAGRVGKS), 81 to 85 (DTPGG), and 147 to 150 (NKGD).

It belongs to the small GTPase superfamily. Ras family. In terms of assembly, interacts with UBF/UBTF. In terms of tissue distribution, widely expressed. Down-regulated in prostate tumors compared to normal prostate tissue. High levels found in colon tumor and normal colon tissue followed by small intestine, liver, jejunum, ileum, bladder and aorta. Lowest levels observed in endothelial cells.

It is found in the nucleus. The protein resides in the nucleolus. The catalysed reaction is GTP + H2O = GDP + phosphate + H(+). Its function is as follows. Regulator of rDNA transcription. Acts in cooperation UBF/UBTF and positively regulates RNA polymerase I transcription. The polypeptide is Ras-like protein family member 11A (Homo sapiens (Human)).